The primary structure comprises 204 residues: N-(5'-phosphoribosyl)anthranilate isomerase (204 aa).

The protein belongs to the TrpF family.

The enzyme catalyses N-(5-phospho-beta-D-ribosyl)anthranilate = 1-(2-carboxyphenylamino)-1-deoxy-D-ribulose 5-phosphate. It participates in amino-acid biosynthesis; L-tryptophan biosynthesis; L-tryptophan from chorismate: step 3/5. The polypeptide is N-(5'-phosphoribosyl)anthranilate isomerase (Desulforudis audaxviator (strain MP104C)).